Reading from the N-terminus, the 234-residue chain is N-(5'-phosphoribosyl)anthranilate isomerase (234 aa).

The segment at 211-234 is disordered; it reads RAASSSPRPVDGESPAFQRSEKAG.

The protein belongs to the TrpF family.

It carries out the reaction N-(5-phospho-beta-D-ribosyl)anthranilate = 1-(2-carboxyphenylamino)-1-deoxy-D-ribulose 5-phosphate. The protein operates within amino-acid biosynthesis; L-tryptophan biosynthesis; L-tryptophan from chorismate: step 3/5. This Afipia carboxidovorans (strain ATCC 49405 / DSM 1227 / KCTC 32145 / OM5) (Oligotropha carboxidovorans) protein is N-(5'-phosphoribosyl)anthranilate isomerase.